The primary structure comprises 61 residues: Sperm protamine P1 (61 aa).

The disordered stretch occupies residues M1–R61.

The protein belongs to the protamine P1 family. As to expression, testis.

Its subcellular location is the nucleus. The protein resides in the chromosome. Protamines substitute for histones in the chromatin of sperm during the haploid phase of spermatogenesis. They compact sperm DNA into a highly condensed, stable and inactive complex. The protein is Sperm protamine P1 (PRM1) of Dasyurus hallucatus (Northern quoll).